The sequence spans 785 residues: Leucyl aminopeptidase (785 aa).

Substrate contacts are provided by residues E106 and 238 to 242 (GAMEN). H273 contributes to the Zn(2+) binding site. Residue E274 is the Proton acceptor of the active site. The Zn(2+) site is built by H277 and E296.

It belongs to the peptidase M1 family. Co-immunoprecipitates with the 60 kDa chaperonin. Zn(2+) is required as a cofactor. In terms of processing, can be phosphorylated by cell extracts.

The protein resides in the cytoplasm. It catalyses the reaction Release of an N-terminal amino acid, Xaa-|-Yaa-, in which Xaa is preferably Leu, but may be other amino acids including Pro although not Arg or Lys, and Yaa may be Pro. Amino acid amides and methyl esters are also readily hydrolyzed, but rates on arylamides are exceedingly low.. Functionally, preferentially acts as a leucyl-aminopeptidase, although it also has activity against other substrates. The polypeptide is Leucyl aminopeptidase (ape2) (Saccharolobus solfataricus (strain ATCC 35092 / DSM 1617 / JCM 11322 / P2) (Sulfolobus solfataricus)).